The sequence spans 92 residues: uncharacterized protein (92 aa).

This is an uncharacterized protein from Escherichia coli (strain K12).